Here is a 509-residue protein sequence, read N- to C-terminus: Transmembrane protein 104 homolog (509 aa).

Topologically, residues 1–19 (MPRLVNGREAAPTYSNLVG) are cytoplasmic. Residues 20-40 (FIFIFNLIVGTGALTLPGVFA) form a helical membrane-spanning segment. At 41–45 (RAGWM) the chain is on the extracellular side. A helical membrane pass occupies residues 46–66 (LSLIVIVLLAIISYMTVTFII). Residues 67–151 (EAMACANAIR…ATLFFNEFGR (85 aa)) are Cytoplasmic-facing. The helical transmembrane segment at 152–172 (VMFYLCLIVYLYGDLSIYSAA) threads the bilayer. Residues 173–218 (VARSLRDVVCDQTNGTDTNNLMYWPGDFENNTSLACWKEHTISRLN) lie on the Extracellular side of the membrane. Residues Asn186, Asn202, and Asn203 are each glycosylated (N-linked (GlcNAc...) asparagine). A helical membrane pass occupies residues 219–239 (MYRVLLIGFTLIFGPFVYFNV). Over 240–248 (QKTKYLQML) the chain is Cytoplasmic. The chain crosses the membrane as a helical span at residues 249 to 269 (TAAFRWMAFTLMICISLKLLI). Residues 270–277 (SRGAKGHP) are Extracellular-facing. The chain crosses the membrane as a helical span at residues 278 to 298 (ATFNVYGIPSLFGACVYSFMC). The Cytoplasmic segment spans residues 299–320 (HHSLPSLLAPIRHKSMVSKILS). A helical transmembrane segment spans residues 321-341 (IDYIIICAFYILLAMTGIFAF). Over 342–361 (ERIEDLYTLDFLPYDVAYVD) the chain is Extracellular. Residues 362-382 (FWSGLLICIDYFLALFPIFTL) form a helical membrane-spanning segment. The Cytoplasmic segment spans residues 383–411 (STSFPIVAITLKNNLQSLFLDMSQYESYS). Residues 412–432 (VILRLCFPLLAIIPPFCITYF) traverse the membrane as a helical segment. Over 433–439 (TESLSSL) the chain is Extracellular. A helical membrane pass occupies residues 440 to 460 (VAFTGTYAGTGIQYIIPVFLV). The Cytoplasmic segment spans residues 461–487 (YFARRTCSELLGSGVVNRFKSPFKSSA). A helical transmembrane segment spans residues 488 to 508 (WLVFVFIWSILCVCLVSINLF). A topological domain (extracellular) is located at residue Ser509.

This sequence belongs to the TMEM104 family.

The protein localises to the membrane. The polypeptide is Transmembrane protein 104 homolog (Drosophila melanogaster (Fruit fly)).